The following is a 279-amino-acid chain: Tryptophan synthase alpha chain (279 aa).

Active-site proton acceptor residues include E50 and D61.

The protein belongs to the TrpA family. Tetramer of two alpha and two beta chains.

It catalyses the reaction (1S,2R)-1-C-(indol-3-yl)glycerol 3-phosphate + L-serine = D-glyceraldehyde 3-phosphate + L-tryptophan + H2O. Its pathway is amino-acid biosynthesis; L-tryptophan biosynthesis; L-tryptophan from chorismate: step 5/5. In terms of biological role, the alpha subunit is responsible for the aldol cleavage of indoleglycerol phosphate to indole and glyceraldehyde 3-phosphate. The protein is Tryptophan synthase alpha chain of Sinorhizobium medicae (strain WSM419) (Ensifer medicae).